Consider the following 614-residue polypeptide: DBH-like monooxygenase protein 1 homolog (614 aa).

Residues 1 to 22 form the signal peptide; sequence MSENKLFCAIVFLTSLFCSTCS. Residues 23-593 are Lumenal-facing; sequence QGTRFVHSAA…CRKDSAIQCE (571 aa). The DOMON domain maps to 37-150; that stretch reads RRYNIKWGFD…STVRVIWAFH (114 aa). The N-linked (GlcNAc...) asparagine glycan is linked to N116. Residue Y205 is part of the active site. Intrachain disulfides connect C207–C259 and C244–C271. Cu cation is bound by residues H237 and H238. N249 carries an N-linked (GlcNAc...) asparagine glycan. Positions 309, 391, and 393 each coordinate Cu cation. 3 cysteine pairs are disulfide-bonded: C366/C482, C370/C552, and C445/C467. The active site involves H391. A glycan (N-linked (GlcNAc...) asparagine) is linked at N454. M466 serves as a coordination point for Cu cation. N519 carries an N-linked (GlcNAc...) asparagine glycan. The chain crosses the membrane as a helical span at residues 594-612; sequence HSLALLLTACLLLILQTCL.

Belongs to the copper type II ascorbate-dependent monooxygenase family. The cofactor is Cu(2+).

It is found in the endoplasmic reticulum membrane. The sequence is that of DBH-like monooxygenase protein 1 homolog (moxd1) from Danio rerio (Zebrafish).